The chain runs to 460 residues: MAKEYKTITQIAGPLIFVEKTEPVGYNEIVNIKMGDGTVRRGQVLDSSADIVVVQVFEGTGGLDKDCGVIFTGETLKLPASVDLLGRILSGSGEPRDGGPRIVPDQLLDINGAAMNPYARLPPKDFIQTGISTIDGTNTLVRGQKLPIFSASGLPHNEIALQIARQASVPGSESAFAVVFAAMGITNEEAQYFMSDFEKTGALERAVVFLNLADDPAVERIVTPRMALTAAEYLAYEHGMHVLVILTDITNYAEALRQMGAARNEVPGRRGYPGYMYTDLATLYERAGIVKGAKGSVTQIPILSMPGDDITHPIPDLSGYITEGQIVVARELHRKGIYPPINVLPSLSRLMNSGIGAGKTREDHKAVSDQMYAGYAEGRDLRGLVAIVGKEALSERDTKFLEFADLFEDKFVRQGRNENRTIEDTLEIGWQILTHLPENQLGRIDNKYIQKYHPAHRKAK.

It belongs to the ATPase alpha/beta chains family. As to quaternary structure, has multiple subunits, A(3), B(3), C, D, E, F, G, I and K(x); there may be a few other subunits as well.

Its subcellular location is the cell membrane. In terms of biological role, component of the A-type ATP synthase that produces ATP from ADP in the presence of a proton gradient across the membrane. The B chain is a regulatory subunit. In Methanosarcina mazei (strain ATCC BAA-159 / DSM 3647 / Goe1 / Go1 / JCM 11833 / OCM 88) (Methanosarcina frisia), this protein is A-type ATP synthase subunit B.